Reading from the N-terminus, the 884-residue chain is Translation initiation factor IF-2 (884 aa).

The interval 58-248 (PEKVEQKRVR…GKTESVETEE (191 aa)) is disordered. Over residues 66–77 (VRSNVIRKRRQP) the composition is skewed to basic residues. Residues 87–106 (EAPAAQAPEAEEVTAPTAEE) are compositionally biased toward low complexity. Residues 172–183 (SRKKAKAKKHQA) are compositionally biased toward basic residues. The segment covering 207-223 (DTAPADSPAAPAAATPA) has biased composition (low complexity). Residues 229–239 (KPSRKDRKKRG) are compositionally biased toward basic residues. The region spanning 384-553 (KRAPVVTIMG…LLQAEMLELK (170 aa)) is the tr-type G domain. The tract at residues 393-400 (GHVDHGKT) is G1. Residue 393-400 (GHVDHGKT) coordinates GTP. Positions 418–422 (GITQH) are G2. Residues 439 to 442 (DTPG) are G3. GTP is bound by residues 439-443 (DTPGH) and 493-496 (NKID). The segment at 493–496 (NKID) is G4. A G5 region spans residues 529–531 (SAK).

The protein belongs to the TRAFAC class translation factor GTPase superfamily. Classic translation factor GTPase family. IF-2 subfamily.

The protein resides in the cytoplasm. One of the essential components for the initiation of protein synthesis. Protects formylmethionyl-tRNA from spontaneous hydrolysis and promotes its binding to the 30S ribosomal subunits. Also involved in the hydrolysis of GTP during the formation of the 70S ribosomal complex. The protein is Translation initiation factor IF-2 of Desulfosudis oleivorans (strain DSM 6200 / JCM 39069 / Hxd3) (Desulfococcus oleovorans).